The sequence spans 737 residues: Phosphoribosylformylglycinamidine synthase subunit PurL (737 aa).

His50 is a catalytic residue. Tyr53 and Lys92 together coordinate ATP. Glu94 contacts Mg(2+). Residues 95 to 98 (SHNH) and Arg117 each bind substrate. His96 functions as the Proton acceptor in the catalytic mechanism. Asp118 is a binding site for Mg(2+). Gln241 lines the substrate pocket. A Mg(2+)-binding site is contributed by Asp269. 313 to 315 (ESQ) lines the substrate pocket. The ATP site is built by Asp494 and Gly531. Asn532 is a Mg(2+) binding site. Ser534 provides a ligand contact to substrate.

It belongs to the FGAMS family. As to quaternary structure, monomer. Part of the FGAM synthase complex composed of 1 PurL, 1 PurQ and 2 PurS subunits.

The protein resides in the cytoplasm. It carries out the reaction N(2)-formyl-N(1)-(5-phospho-beta-D-ribosyl)glycinamide + L-glutamine + ATP + H2O = 2-formamido-N(1)-(5-O-phospho-beta-D-ribosyl)acetamidine + L-glutamate + ADP + phosphate + H(+). The protein operates within purine metabolism; IMP biosynthesis via de novo pathway; 5-amino-1-(5-phospho-D-ribosyl)imidazole from N(2)-formyl-N(1)-(5-phospho-D-ribosyl)glycinamide: step 1/2. In terms of biological role, part of the phosphoribosylformylglycinamidine synthase complex involved in the purines biosynthetic pathway. Catalyzes the ATP-dependent conversion of formylglycinamide ribonucleotide (FGAR) and glutamine to yield formylglycinamidine ribonucleotide (FGAM) and glutamate. The FGAM synthase complex is composed of three subunits. PurQ produces an ammonia molecule by converting glutamine to glutamate. PurL transfers the ammonia molecule to FGAR to form FGAM in an ATP-dependent manner. PurS interacts with PurQ and PurL and is thought to assist in the transfer of the ammonia molecule from PurQ to PurL. The polypeptide is Phosphoribosylformylglycinamidine synthase subunit PurL (Rhodopseudomonas palustris (strain BisA53)).